A 674-amino-acid polypeptide reads, in one-letter code: MNDMTLYLIIALVPLAGSLIAGLFGNKIGRAGAHTVTILGVAVSAVLSAYVLWGFIDGSRAKFDENVYTWLTMGGLDFSVGFLVDTMTAMMMVVVTGVSLMVHIYTIGYMHDEKVGYQRFFSYISLFTFSMLMLIMSNNFIQLFFGWEAVGLVSYLLIGFYFKRPSATFANLKAFLINRVGDFGFLLGIGLVLAYFGGSLRYQDVFAYLPNVQNATIQLFPGVEWSLITVTCLLLFVGAMGKSAQFPLHVWLPDSMEGPTPISALIHAATMVTAGLFMVSRMSPIYEMSSTALSVIMVIGAITALFMGFLGVIQNDIKRVVAYSTLSQLGYMTVALGASAYSVAMFHVMTHAFFKALLFLAAGSAIIGMHHDQDMRHMGNLKKYMPVTWLTMLIGNLSLIGTPFFSGFYSKDSIIEAAKYSTLPGSGFAYFAVLASVFVTAFYAFRQYFMVFHGEEKWRSLPEHHSDGHGEEHHGLGKNDNPHESPLVVTLPLILLAVPSVIIGYIAIEPMLYGDFFKDVIFVNADAHPTIHIMKEEFHGALAMVSHSLHSPVLYLAIAGVLSAWLLYVKLPHLPAKIAQTFRPIYVLFENKYYLDALYFNVFAKGTRALGTFFWKVGDTAIIDNGIVNGSAKLVGAIAAQVRKAQTGFIYTYAAAMVFGVLVLLGMTFWGLFR.

16 helical membrane passes run M4 to F24, V36 to I56, V67 to M87, M90 to M110, V115 to I135, F140 to F160, V180 to L200, L219 to A239, P259 to V279, L293 to I313, V348 to G368, M385 to F405, G425 to F445, V488 to I508, L549 to V569, and Y653 to F673.

The protein belongs to the complex I subunit 5 family.

It localises to the cell membrane. The catalysed reaction is a quinone + NADH + 5 H(+)(in) = a quinol + NAD(+) + 4 H(+)(out). Functionally, NDH-1 shuttles electrons from NADH, via FMN and iron-sulfur (Fe-S) centers, to quinones in the respiratory chain. The immediate electron acceptor for the enzyme in this species is believed to be ubiquinone. Couples the redox reaction to proton translocation (for every two electrons transferred, four hydrogen ions are translocated across the cytoplasmic membrane), and thus conserves the redox energy in a proton gradient. The protein is NADH-quinone oxidoreductase subunit L (nuoL) of Neisseria meningitidis serogroup B (strain ATCC BAA-335 / MC58).